The sequence spans 352 residues: Quinolinate synthase (352 aa).

The iminosuccinate site is built by His-55 and Ser-72. A [4Fe-4S] cluster-binding site is contributed by Cys-117. Iminosuccinate-binding positions include 143–145 and Ser-160; that span reads YVN. Cys-204 is a [4Fe-4S] cluster binding site. Iminosuccinate contacts are provided by residues 230 to 232 and Thr-258; that span reads HPE. Residue Cys-303 coordinates [4Fe-4S] cluster.

Belongs to the quinolinate synthase family. Type 2 subfamily. The cofactor is [4Fe-4S] cluster.

It is found in the cytoplasm. The catalysed reaction is iminosuccinate + dihydroxyacetone phosphate = quinolinate + phosphate + 2 H2O + H(+). It functions in the pathway cofactor biosynthesis; NAD(+) biosynthesis; quinolinate from iminoaspartate: step 1/1. Its function is as follows. Catalyzes the condensation of iminoaspartate with dihydroxyacetone phosphate to form quinolinate. The polypeptide is Quinolinate synthase (Mycobacterium leprae (strain Br4923)).